Here is a 212-residue protein sequence, read N- to C-terminus: Ribonuclease HII (212 aa).

An RNase H type-2 domain is found at 24-212 (QLVAGVDEVG…PVKKALGIEE (189 aa)). A divalent metal cation is bound by residues Asp30, Glu31, and Asp122.

It belongs to the RNase HII family. Requires Mn(2+) as cofactor. Mg(2+) serves as cofactor.

Its subcellular location is the cytoplasm. It carries out the reaction Endonucleolytic cleavage to 5'-phosphomonoester.. Functionally, endonuclease that specifically degrades the RNA of RNA-DNA hybrids. This Vibrio campbellii (strain ATCC BAA-1116) protein is Ribonuclease HII.